Reading from the N-terminus, the 66-residue chain is Sec-independent protein translocase protein TatA (66 aa).

Residues 1–21 (MIGGLGMPELIIILVIILIIF) traverse the membrane as a helical segment. The interval 45–66 (RDAELNEGDKDDKEKEQEKLDK) is disordered.

This sequence belongs to the TatA/E family. In terms of assembly, the Tat system comprises two distinct complexes: a TatABC complex, containing multiple copies of TatA, TatB and TatC subunits, and a separate TatA complex, containing only TatA subunits. Substrates initially bind to the TatABC complex, which probably triggers association of the separate TatA complex to form the active translocon.

It localises to the cell inner membrane. Part of the twin-arginine translocation (Tat) system that transports large folded proteins containing a characteristic twin-arginine motif in their signal peptide across membranes. TatA could form the protein-conducting channel of the Tat system. The polypeptide is Sec-independent protein translocase protein TatA (Desulforapulum autotrophicum (strain ATCC 43914 / DSM 3382 / VKM B-1955 / HRM2) (Desulfobacterium autotrophicum)).